A 445-amino-acid chain; its full sequence is Phosphoglucosamine mutase (445 aa).

Serine 102 serves as the catalytic Phosphoserine intermediate. The Mg(2+) site is built by serine 102, aspartate 241, aspartate 243, and aspartate 245. Serine 102 carries the post-translational modification Phosphoserine.

Belongs to the phosphohexose mutase family. Mg(2+) is required as a cofactor. In terms of processing, activated by phosphorylation.

It catalyses the reaction alpha-D-glucosamine 1-phosphate = D-glucosamine 6-phosphate. Functionally, catalyzes the conversion of glucosamine-6-phosphate to glucosamine-1-phosphate. The chain is Phosphoglucosamine mutase from Serratia proteamaculans (strain 568).